The following is a 528-amino-acid chain: MSSVQSEGQRKPAIVILDFGSQYSELIARRVRETEVFSVVLGYSTSAEELRALAPRGIILSGGPSSVYADEAPLCDPAIWDLGVPVLGVCYGMQLMVQQLGGQVVAATGKAEYGKAPLKVDDPTALLTNVESGSTMWMSHGDSVEALPDGFLRLAHTANTPEAAIANHKRRLYGVQFHPEVVHSTGGMVMIRNFVYHICGCEPDWTTEAFIDEAVANVRDQVGQKRVLLALSGGVDSSTLAFLLKKAIGDQLTCMFIDQGFMRKGEPEFLMEFFDRKFNIHVEYINARERFIKKLDGITDPEEKRKIIGTEFIRVFEEESRRLGPFDYLVQGTLYPDVIESAGTNVDPKTGERVAVKIKSHHNVGGLPKDLRFKLVEPLRKLFKDEVRKVGRTLGLPEEIVSRHPFPGPGLAIRILGEVTEEKLDCLRDADLIVREEVNAAGLYHDIWQAFAVLLPVRSVGVMGDKRTYAWPIVLRCVSSEDGMTADWSRLPYDLMEVISNRIVNEVKGVNRVVMDITSKPPGTIEWE.

Residues A13–D204 form the Glutamine amidotransferase type-1 domain. The Nucleophile role is filled by C90. Active-site residues include H178 and E180. A GMPS ATP-PPase domain is found at W205 to R403. Residue S232–S238 participates in ATP binding.

In terms of assembly, homodimer.

It carries out the reaction XMP + L-glutamine + ATP + H2O = GMP + L-glutamate + AMP + diphosphate + 2 H(+). It participates in purine metabolism; GMP biosynthesis; GMP from XMP (L-Gln route): step 1/1. Its function is as follows. Catalyzes the synthesis of GMP from XMP. The sequence is that of GMP synthase [glutamine-hydrolyzing] from Synechococcus sp. (strain CC9311).